A 508-amino-acid chain; its full sequence is GMP synthase [glutamine-hydrolyzing] (508 aa).

The region spanning 1–189 is the Glutamine amidotransferase type-1 domain; it reads MILVLDFGSQ…ALLVCGCEKT (189 aa). Cys-78 serves as the catalytic Nucleophile. Catalysis depends on residues His-163 and Glu-165. Residues 190 to 383 enclose the GMPS ATP-PPase domain; the sequence is WGMQHFAQKE…LGISQDFLMR (194 aa). 217-223 contributes to the ATP binding site; that stretch reads SGGVDST.

As to quaternary structure, homodimer.

The catalysed reaction is XMP + L-glutamine + ATP + H2O = GMP + L-glutamate + AMP + diphosphate + 2 H(+). It participates in purine metabolism; GMP biosynthesis; GMP from XMP (L-Gln route): step 1/1. Functionally, catalyzes the synthesis of GMP from XMP. In Helicobacter pylori (strain Shi470), this protein is GMP synthase [glutamine-hydrolyzing].